Here is a 150-residue protein sequence, read N- to C-terminus: Small ribosomal subunit protein uS11 (150 aa).

The tract at residues 130–150 is disordered; it reads DVTPIPSDSTRRKSGRRGRRL. Basic residues predominate over residues 141–150; sequence RKSGRRGRRL.

This sequence belongs to the universal ribosomal protein uS11 family.

The polypeptide is Small ribosomal subunit protein uS11 (RPS14) (Lupinus luteus (European yellow lupine)).